A 368-amino-acid chain; its full sequence is MTTAPLILLAAGGTGGHLFPAEALGVELMKRGLRVRLVTDSRALRYSGLFSKDLTDVVPSETVRGRSPWALARTGLMLAAGTAVALNLMRVLKPAAVVGFGGYPTLPPLIAARLRGIPTVIHDSNAVMGRANSFLSKRVNAIATSLPGVLDKKPSLAGKITTTGTPMRPAILAAAAVPFATPGLGDPLRVLVVGGSQGARVMSDIVPGAIERLEPALRQRLILTQQVRDEDMARVRGFYDRLEIKAELAPFFADLPARLASNHIIISRSGAGTVAELGAIGRPSILVPLPGAIDQDQFANAGVLADVGGAIRIVQPDFTPDRLAAELSALAAGPARLAAMATAARTVGRLDAAGRLADLVMRVARTGA.

UDP-N-acetyl-alpha-D-glucosamine is bound by residues 14–16, Asn-125, Arg-168, Ser-196, and Gln-297; that span reads TGG.

Belongs to the glycosyltransferase 28 family. MurG subfamily.

It is found in the cell inner membrane. The catalysed reaction is di-trans,octa-cis-undecaprenyl diphospho-N-acetyl-alpha-D-muramoyl-L-alanyl-D-glutamyl-meso-2,6-diaminopimeloyl-D-alanyl-D-alanine + UDP-N-acetyl-alpha-D-glucosamine = di-trans,octa-cis-undecaprenyl diphospho-[N-acetyl-alpha-D-glucosaminyl-(1-&gt;4)]-N-acetyl-alpha-D-muramoyl-L-alanyl-D-glutamyl-meso-2,6-diaminopimeloyl-D-alanyl-D-alanine + UDP + H(+). It functions in the pathway cell wall biogenesis; peptidoglycan biosynthesis. Cell wall formation. Catalyzes the transfer of a GlcNAc subunit on undecaprenyl-pyrophosphoryl-MurNAc-pentapeptide (lipid intermediate I) to form undecaprenyl-pyrophosphoryl-MurNAc-(pentapeptide)GlcNAc (lipid intermediate II). The polypeptide is UDP-N-acetylglucosamine--N-acetylmuramyl-(pentapeptide) pyrophosphoryl-undecaprenol N-acetylglucosamine transferase (Nitrobacter winogradskyi (strain ATCC 25391 / DSM 10237 / CIP 104748 / NCIMB 11846 / Nb-255)).